A 127-amino-acid chain; its full sequence is Protein yippee-like 4 (127 aa).

The 98-residue stretch at 27-124 (RTYSCVHCRA…IEMSHMVKDN (98 aa)) folds into the Yippee domain. Zn(2+)-binding residues include cysteine 31, cysteine 34, cysteine 87, and cysteine 90. Phosphothreonine is present on residues threonine 92 and threonine 93. Tyrosine 98 bears the Phosphotyrosine mark.

Belongs to the yippee family. Detected in brain, spleen and testis.

It localises to the nucleus. It is found in the nucleolus. This is Protein yippee-like 4 (Ypel4) from Mus musculus (Mouse).